Here is a 278-residue protein sequence, read N- to C-terminus: Large ribosomal subunit protein uL2 (278 aa).

2 disordered regions span residues 29 to 57 (PEKS…QGGG) and 224 to 278 (VAMN…NKKR). Residues 258–278 (RSPKKASNKYIVRRRKTNKKR) are compositionally biased toward basic residues.

The protein belongs to the universal ribosomal protein uL2 family. As to quaternary structure, part of the 50S ribosomal subunit. Forms a bridge to the 30S subunit in the 70S ribosome.

Its function is as follows. One of the primary rRNA binding proteins. Required for association of the 30S and 50S subunits to form the 70S ribosome, for tRNA binding and peptide bond formation. It has been suggested to have peptidyltransferase activity; this is somewhat controversial. Makes several contacts with the 16S rRNA in the 70S ribosome. The protein is Large ribosomal subunit protein uL2 of Streptomyces griseus subsp. griseus (strain JCM 4626 / CBS 651.72 / NBRC 13350 / KCC S-0626 / ISP 5235).